Here is a 119-residue protein sequence, read N- to C-terminus: LNVLCNNPHTADCNNDAQVDRYFREGTTCLMSPACTSEGYASQHECQQACFVGGEDHSSEMHSSCLGDPPTSCAEGTDITYYDSDSKTCKVLAASCPSGENTFESEVECQVACGAPIEG.

One can recognise a BPTI/Kunitz inhibitor 1 domain in the interval 1-53 (LNVLCNNPHTADCNNDAQVDRYFREGTTCLMSPACTSEGYASQHECQQACFVG). 3 cysteine pairs are disulfide-bonded: Cys5/Cys50, Cys13/Cys35, and Cys29/Cys46. Positions 54 to 60 (GEDHSSE) are linker. The region spanning 61–116 (MHSSCLGDPPTSCAEGTDITYYDSDSKTCKVLAASCPSGENTFESEVECQVACGAP) is the BPTI/Kunitz inhibitor 2 domain. Intrachain disulfides connect Cys65–Cys113, Cys73–Cys96, and Cys89–Cys109.

Expressed in salivary glands.

Its subcellular location is the cytoplasmic vesicle. The protein localises to the secretory vesicle. It localises to the secreted. Functionally, tick salivary thrombin inhibitor that plays an important part in the anti-hemostatic strategy of ticks. Is a potent and highly selective thrombin inhibitor (Ki=10 pM). This Ornithodoros moubata (Soft tick) protein is Ornithodorin.